A 280-amino-acid chain; its full sequence is B3 domain-containing protein At5g25470 (280 aa).

The TF-B3 1 DNA-binding region spans 20 to 114; it reads WKSLSPGQNW…FLEVQIFKND (95 aa). A disordered region spans residues 122–153; it reads PPEVEPETEPFHPTTPKNSHKETTTASASASA. Residues 183 to 276 constitute a DNA-binding region (TF-B3 2); it reads YFVKTLTKGN…ELVTAVRVHF (94 aa).

Its subcellular location is the nucleus. The chain is B3 domain-containing protein At5g25470 from Arabidopsis thaliana (Mouse-ear cress).